A 462-amino-acid chain; its full sequence is Asparagine--tRNA ligase (462 aa).

It belongs to the class-II aminoacyl-tRNA synthetase family. Homodimer.

It localises to the cytoplasm. The enzyme catalyses tRNA(Asn) + L-asparagine + ATP = L-asparaginyl-tRNA(Asn) + AMP + diphosphate + H(+). The protein is Asparagine--tRNA ligase of Borreliella afzelii (strain PKo) (Borrelia afzelii).